A 781-amino-acid polypeptide reads, in one-letter code: Cation channel sperm-associated auxiliary subunit delta (781 aa).

The first 20 residues, Met1–Ala20, serve as a signal peptide directing secretion. At Arg21 to Pro725 the chain is on the extracellular side. 7 disulfide bridges follow: Cys24–Cys370, Cys60–Cys146, Cys145–Cys153, Cys388–Cys497, Cys511–Cys705, Cys526–Cys573, and Cys625–Cys655. N-linked (GlcNAc...) asparagine glycans are attached at residues Asn231, Asn294, Asn458, Asn473, Asn539, and Asn631. The chain crosses the membrane as a helical span at residues Pro726–Gln749. Topologically, residues Leu750–Cys781 are cytoplasmic.

It belongs to the CATSPERD family. Component of the CatSper complex or CatSpermasome composed of the core pore-forming members CATSPER1, CATSPER2, CATSPER3 and CATSPER4 as well as auxiliary members CATSPERB, CATSPERG, CATSPERD, CATSPERE, CATSPERZ, C2CD6/CATSPERT, TMEM249, TMEM262 and EFCAB9. HSPA1 may be an additional auxiliary complex member. The core complex members CATSPER1, CATSPER2, CATSPER3 and CATSPER4 form a heterotetrameric channel. The auxiliary CATSPERB, CATSPERG, CATSPERD and CATSPERE subunits form a pavilion-like structure over the pore which stabilizes the complex through interactions with CATSPER4, CATSPER3, CATSPER1 and CATSPER2 respectively. TMEM262/CATSPERH interacts with CATSPERB, further stabilizing the complex. C2CD6/CATSPERT interacts at least with CATSPERD and is required for targeting the CatSper complex in the flagellar membrane.

Its subcellular location is the cell projection. It localises to the cilium. The protein localises to the flagellum membrane. Functionally, auxiliary component of the CatSper complex, a complex involved in sperm cell hyperactivation. Sperm cell hyperactivation is needed for sperm motility which is essential late in the preparation of sperm for fertilization. Required for CATSPER1 stability before intraflagellar transport and/or incorporation of the CatSper complex channel into the flagellar membrane. This chain is Cation channel sperm-associated auxiliary subunit delta, found in Bos taurus (Bovine).